Consider the following 402-residue polypeptide: Protein HAIKU1 (402 aa).

Disordered stretches follow at residues 1–44 (MDRP…LQTQ), 63–135 (TGSP…QQPM), 160–266 (SSLG…LVPS), and 346–402 (QPLT…WNDY). Residues 24-44 (LHQSTFAASTSNGAAPRLQTQ) show a composition bias toward polar residues. The VQ signature appears at 55–64 (FRSIVQQLTG). Residues 76 to 87 (QNNSLRPQNTRL) are compositionally biased toward polar residues. Over residues 103–113 (VPLPSMAPPQS) the composition is skewed to pro residues. Positions 160–173 (SSLGDSGPNANQMQ) are enriched in polar residues. Positions 218–240 (MPAQSQSQSQPQPQPQPQQHMMP) are enriched in low complexity. The segment covering 257–266 (YLPPPGLVPS) has biased composition (pro residues). Positions 349-358 (TPNFSFSQIA) are enriched in polar residues. The segment covering 371–380 (QGPPQPPPSP) has biased composition (pro residues). Residues 381–390 (GLMFPLSPSG) show a composition bias toward low complexity.

As to quaternary structure, interacts with WRKY10. Interacts with MPK6.

It is found in the nucleus. Its function is as follows. Modulates seed size by negatively regulating the cellularization of syncytial endosperm. May function by binding and modulating the activity of WRKY10 transcription factor. This Arabidopsis thaliana (Mouse-ear cress) protein is Protein HAIKU1.